Consider the following 418-residue polypeptide: Nickel and cobalt resistance protein CnrC (418 aa).

A signal peptide spans 1 to 29 (MKQVISSFLCRPRFVGSAIWLLPVALSHA).

Belongs to the outer membrane factor (OMF) (TC 1.B.17) family.

In terms of biological role, the products of the genes cnrA, cnrB, and cnrC are likely to form a membrane-bound protein complex catalyzing an energy-dependent efflux of Ni(2+) and Co(2+). The mechanism of action of the CnrCBA complex may be that of a proton/cation antiporter. This Cupriavidus metallidurans (strain ATCC 43123 / DSM 2839 / NBRC 102507 / CH34) (Ralstonia metallidurans) protein is Nickel and cobalt resistance protein CnrC (cnrC).